A 1183-amino-acid polypeptide reads, in one-letter code: Rab11 family-interacting protein 3 (1183 aa).

Residues 423–448 form a disordered region; the sequence is AEDPSTESLPRKNGQEESKSALPVST. The segment covering 431–441 has biased composition (basic and acidic residues); that stretch reads LPRKNGQEESK. EF-hand domains lie at 706–741 and 738–773; these read EEQS…YGAE and YGAE…ISNE. The Ca(2+) site is built by aspartate 719, aspartate 721, aspartate 723, glutamate 730, aspartate 751, serine 753, and aspartate 762. A coiled-coil region spans residues 902–1121; it reads ELEKDSLESE…NGQIINLSIQ (220 aa). The segment at 911–1015 is ARF-binding domain (ABD); it reads EEQHARLRQE…LQDEADDITQ (105 aa). A disordered region spans residues 1005–1044; the sequence is KLQDEADDITQRLNEESESRRKMSDKLSHERHTNQKEKEC. One can recognise an FIP-RBD domain in the interval 1121–1183; the sequence is QGAKSLFTES…ESNPSILEVK (63 aa).

The protein localises to the recycling endosome membrane. Its subcellular location is the cytoplasm. The protein resides in the cytoskeleton. It is found in the microtubule organizing center. It localises to the centrosome. The protein localises to the cleavage furrow. Its subcellular location is the midbody. The protein resides in the golgi apparatus membrane. It is found in the golgi apparatus. It localises to the trans-Golgi network membrane. In terms of biological role, downstream effector molecule for Rab11 GTPase which acts as a regulator of endocytic trafficking, cytokinesis and intracellular ciliogenesis by participating in membrane delivery. The protein is Rab11 family-interacting protein 3 (rab11fip3) of Danio rerio (Zebrafish).